The following is a 163-amino-acid chain: SsrA-binding protein (163 aa).

This sequence belongs to the SmpB family.

It is found in the cytoplasm. Required for rescue of stalled ribosomes mediated by trans-translation. Binds to transfer-messenger RNA (tmRNA), required for stable association of tmRNA with ribosomes. tmRNA and SmpB together mimic tRNA shape, replacing the anticodon stem-loop with SmpB. tmRNA is encoded by the ssrA gene; the 2 termini fold to resemble tRNA(Ala) and it encodes a 'tag peptide', a short internal open reading frame. During trans-translation Ala-aminoacylated tmRNA acts like a tRNA, entering the A-site of stalled ribosomes, displacing the stalled mRNA. The ribosome then switches to translate the ORF on the tmRNA; the nascent peptide is terminated with the 'tag peptide' encoded by the tmRNA and targeted for degradation. The ribosome is freed to recommence translation, which seems to be the essential function of trans-translation. This chain is SsrA-binding protein, found in Shewanella putrefaciens (strain CN-32 / ATCC BAA-453).